The sequence spans 60 residues: Beta-defensin 8 (60 aa).

Positions 1 to 22 are cleaved as a signal peptide; the sequence is MRIHYLLFTFLLVLLSPLAAFS. Residues 23–25 constitute a propeptide that is removed on maturation; that stretch reads QKI. Intrachain disulfides connect cysteine 31–cysteine 58, cysteine 38–cysteine 52, and cysteine 42–cysteine 59.

It belongs to the beta-defensin family. As to expression, most highly expressed in testis and heart.

Its subcellular location is the secreted. Functionally, a synthetic peptide displays antimicrobial activities against S.aureus, P.aeruginosa, E.coli and B.cepacia. The antimicrobial activity against S.aureus, E.coli and B.cepacia is reduced in raised concentration of NaCl, but its action against P.aeruginosa is independent of NaCl concentration. This Mus musculus (Mouse) protein is Beta-defensin 8 (Defb8).